The primary structure comprises 585 residues: MITRLSHLFLRTLRDDPADAEVPSHKLLVRAGYVRRVAPGVYSWLPLGLRVLRKVEDVVRAEMNAIGGQEISLPALLPRDPYETTNRWTEYGDSLFRLHDRKGADYLLGPTHEELFALTVKGEYNSYKDLPVTLYQIQTKYRDEERPRAGILRGREFVMKDSYSFDLDEDGLKASYNAHREAYQRIFDRLGVKYVIVAATSGAMGGSASEEFLADSPVGEDTYVICRESGYAANVEAVVTPAPEPQPIEGRPAAVVHDTPDTPTIASLVEWANAAGIAEQFGRPVTAADTLKNVMVKLRHPDGKTEIVGIGVPGDREVDDKRLGASVEPAEVELLTDADFAANPFLVKGYIGPKALQENGIRYLVDPRVGTGTAWITGADSPGKHVVGLIAGRDFTPDGTIEAAEVRDGDPSPDGRGTLEAARGIEIGHIFQLGYKYTDAFEVDVLGENGKPVRLIMGSYGIGVSRMVAVIAEQQHDEKGLRWPAAVAPFDVHVVVANKDEAARTGAEQVVAGLDAQGLDVLFDDRTASPGVKFKDAELLGMPWVVVIGRGWADGTVELRNRFTGEAENVPAAEAVATVVARIRG.

Belongs to the class-II aminoacyl-tRNA synthetase family. ProS type 1 subfamily. Homodimer.

The protein localises to the cytoplasm. The enzyme catalyses tRNA(Pro) + L-proline + ATP = L-prolyl-tRNA(Pro) + AMP + diphosphate. In terms of biological role, catalyzes the attachment of proline to tRNA(Pro) in a two-step reaction: proline is first activated by ATP to form Pro-AMP and then transferred to the acceptor end of tRNA(Pro). As ProRS can inadvertently accommodate and process non-cognate amino acids such as alanine and cysteine, to avoid such errors it has two additional distinct editing activities against alanine. One activity is designated as 'pretransfer' editing and involves the tRNA(Pro)-independent hydrolysis of activated Ala-AMP. The other activity is designated 'posttransfer' editing and involves deacylation of mischarged Ala-tRNA(Pro). The misacylated Cys-tRNA(Pro) is not edited by ProRS. The chain is Proline--tRNA ligase from Nocardia farcinica (strain IFM 10152).